Reading from the N-terminus, the 100-residue chain is Urease subunit gamma (100 aa).

This sequence belongs to the urease gamma subunit family. In terms of assembly, heterotrimer of UreA (gamma), UreB (beta) and UreC (alpha) subunits. Three heterotrimers associate to form the active enzyme.

The protein resides in the cytoplasm. It carries out the reaction urea + 2 H2O + H(+) = hydrogencarbonate + 2 NH4(+). Its pathway is nitrogen metabolism; urea degradation; CO(2) and NH(3) from urea (urease route): step 1/1. The protein is Urease subunit gamma of Cupriavidus metallidurans (strain ATCC 43123 / DSM 2839 / NBRC 102507 / CH34) (Ralstonia metallidurans).